The chain runs to 363 residues: 3-isopropylmalate dehydrogenase (363 aa).

NAD(+) is bound at residue 78–91 (GPKWEHLPPDQQPE). Residues Arg-99, Arg-109, Arg-138, and Asp-227 each coordinate substrate. Residues Asp-227, Asp-251, and Asp-255 each contribute to the Mg(2+) site. NAD(+) is bound at residue 285–297 (GSAPDIAGKNIAN).

Belongs to the isocitrate and isopropylmalate dehydrogenases family. LeuB type 1 subfamily. In terms of assembly, homodimer. Mg(2+) serves as cofactor. Mn(2+) is required as a cofactor.

Its subcellular location is the cytoplasm. It carries out the reaction (2R,3S)-3-isopropylmalate + NAD(+) = 4-methyl-2-oxopentanoate + CO2 + NADH. Its pathway is amino-acid biosynthesis; L-leucine biosynthesis; L-leucine from 3-methyl-2-oxobutanoate: step 3/4. Catalyzes the oxidation of 3-carboxy-2-hydroxy-4-methylpentanoate (3-isopropylmalate) to 3-carboxy-4-methyl-2-oxopentanoate. The product decarboxylates to 4-methyl-2 oxopentanoate. The sequence is that of 3-isopropylmalate dehydrogenase from Shigella sonnei (strain Ss046).